The chain runs to 874 residues: Alanine--tRNA ligase (874 aa).

Histidine 562, histidine 566, cysteine 664, and histidine 668 together coordinate Zn(2+).

Belongs to the class-II aminoacyl-tRNA synthetase family. Requires Zn(2+) as cofactor.

It is found in the cytoplasm. The catalysed reaction is tRNA(Ala) + L-alanine + ATP = L-alanyl-tRNA(Ala) + AMP + diphosphate. Catalyzes the attachment of alanine to tRNA(Ala) in a two-step reaction: alanine is first activated by ATP to form Ala-AMP and then transferred to the acceptor end of tRNA(Ala). Also edits incorrectly charged Ser-tRNA(Ala) and Gly-tRNA(Ala) via its editing domain. The polypeptide is Alanine--tRNA ligase (Neisseria meningitidis serogroup C (strain 053442)).